We begin with the raw amino-acid sequence, 488 residues long: 3-octaprenyl-4-hydroxybenzoate carboxy-lyase (488 aa).

Mn(2+) is bound at residue Asn172. Residues 175 to 177, 189 to 191, and 194 to 195 contribute to the prenylated FMN site; these read IYR, RWL, and RG. Glu238 contacts Mn(2+). Asp287 functions as the Proton donor in the catalytic mechanism.

The protein belongs to the UbiD family. As to quaternary structure, homohexamer. Prenylated FMN is required as a cofactor. The cofactor is Mn(2+).

It is found in the cell membrane. The enzyme catalyses a 4-hydroxy-3-(all-trans-polyprenyl)benzoate + H(+) = a 2-(all-trans-polyprenyl)phenol + CO2. The protein operates within cofactor biosynthesis; ubiquinone biosynthesis. Its function is as follows. Catalyzes the decarboxylation of 3-octaprenyl-4-hydroxy benzoate to 2-octaprenylphenol, an intermediate step in ubiquinone biosynthesis. The chain is 3-octaprenyl-4-hydroxybenzoate carboxy-lyase from Pseudomonas fluorescens (strain ATCC BAA-477 / NRRL B-23932 / Pf-5).